Reading from the N-terminus, the 148-residue chain is Large ribosomal subunit protein uL15 (148 aa).

A compositionally biased stretch (basic residues) spans 1–28 (MIRRRKKVRKLRGSHTHGWGCKKKHRGG). Residues 1-43 (MIRRRKKVRKLRGSHTHGWGCKKKHRGGGSKGGRGMAGTGKRK) form a disordered region. Gly residues predominate over residues 29-38 (GSKGGRGMAG).

Belongs to the universal ribosomal protein uL15 family. Part of the 50S ribosomal subunit.

Its function is as follows. Binds to the 23S rRNA. This chain is Large ribosomal subunit protein uL15, found in Thermococcus kodakarensis (strain ATCC BAA-918 / JCM 12380 / KOD1) (Pyrococcus kodakaraensis (strain KOD1)).